Consider the following 61-residue polypeptide: MSSLKIKLVKGRAGKDKRQLATLDALDLTRKDKVVIKPDNPQIRGMIRTVHHLVEWEEIDS.

It belongs to the universal ribosomal protein uL30 family. In terms of assembly, part of the 50S ribosomal subunit.

This is Large ribosomal subunit protein uL30 from Petrotoga mobilis (strain DSM 10674 / SJ95).